A 244-amino-acid chain; its full sequence is ATP synthase subunit b 2 (244 aa).

Residues 2–22 form a helical membrane-spanning segment; that stretch reads LIDWFTIVAQIINFLILVFLL.

Belongs to the ATPase B chain family. As to quaternary structure, F-type ATPases have 2 components, F(1) - the catalytic core - and F(0) - the membrane proton channel. F(1) has five subunits: alpha(3), beta(3), gamma(1), delta(1), epsilon(1). F(0) has four main subunits: a(1), b(1), b'(1) and c(10-14). The alpha and beta chains form an alternating ring which encloses part of the gamma chain. F(1) is attached to F(0) by a central stalk formed by the gamma and epsilon chains, while a peripheral stalk is formed by the delta, b and b' chains.

It is found in the cellular thylakoid membrane. Functionally, f(1)F(0) ATP synthase produces ATP from ADP in the presence of a proton or sodium gradient. F-type ATPases consist of two structural domains, F(1) containing the extramembraneous catalytic core and F(0) containing the membrane proton channel, linked together by a central stalk and a peripheral stalk. During catalysis, ATP synthesis in the catalytic domain of F(1) is coupled via a rotary mechanism of the central stalk subunits to proton translocation. In terms of biological role, component of the F(0) channel, it forms part of the peripheral stalk, linking F(1) to F(0). The polypeptide is ATP synthase subunit b 2 (Crocosphaera subtropica (strain ATCC 51142 / BH68) (Cyanothece sp. (strain ATCC 51142))).